The chain runs to 776 residues: Semaphorin-4F (776 aa).

An N-terminal signal peptide occupies residues 1–39 (MLARAERPRPGPRPPPVFPFPPPLSLLLLLAILSAPVCG). Topologically, residues 40–665 (RVPRSVPRTS…GPSNRAHTVV (626 aa)) are extracellular. One can recognise a Sema domain in the interval 47–515 (RTSLPISEAD…SHTEVTQVNT (469 aa)). Residue Asn-69 is glycosylated (N-linked (GlcNAc...) asparagine). Cys-117 and Cys-127 are joined by a disulfide. Asn-138 carries N-linked (GlcNAc...) asparagine glycosylation. Cystine bridges form between Cys-145/Cys-154, Cys-278/Cys-389, and Cys-302/Cys-348. The N-linked (GlcNAc...) asparagine glycan is linked to Asn-514. Residues 517-568 (NCGRLQSCSECILAQDPVCAWSFRLDACVAHAGEHRGMVQDIESADVSSLCP) enclose the PSI domain. Disulfide bonds link Cys-518–Cys-535, Cys-527–Cys-544, and Cys-592–Cys-633. The Ig-like C2-type domain maps to 585-640 (VGHVVLPCSPSSAWASCVWHQPSGVTALTPRRDGLEVVVTPGAMGAYACECQEGGA). Residues 666-686 (GAGLVGFLLGVLAASLTLLLI) traverse the membrane as a helical segment. The Cytoplasmic segment spans residues 687-776 (GRRQQRRRQR…PLATCDETSI (90 aa)). The interval 702–741 (DKVGLDLGAPPSGTTSYSQDPPSPSPEDERLPLALGKRGS) is disordered. Phosphoserine is present on residues Ser-724 and Ser-726. A PDZ-binding motif is present at residues 774 to 776 (TSI).

It belongs to the semaphorin family. As to quaternary structure, interacts (via PDZ-binding motif) with DLG4/SAP90 (via PDZ domain 2); this interaction may promote translocation of DLG4/SAP90 to the membrane. Expressed at low levels in the developing embryo. Expressed at high levels in the lung and adult central nervous system, including the dorsal root ganglia.

The protein localises to the cell membrane. Its subcellular location is the postsynaptic density. It localises to the perikaryon. The protein resides in the cell projection. It is found in the dendrite. Functionally, probable cell surface receptor that regulates oligodendroglial precursor cell migration. Might also regulate differentiation of oligodendroglial precursor cells. Has growth cone collapse activity against retinal ganglion-cell axons. The polypeptide is Semaphorin-4F (Sema4f) (Rattus norvegicus (Rat)).